We begin with the raw amino-acid sequence, 414 residues long: Serine hydroxymethyltransferase (414 aa).

(6S)-5,6,7,8-tetrahydrofolate is bound by residues Leu-117 and 121-123 (GHL). The residue at position 226 (Lys-226) is an N6-(pyridoxal phosphate)lysine. Position 349–351 (349–351 (SPF)) interacts with (6S)-5,6,7,8-tetrahydrofolate.

Belongs to the SHMT family. Homodimer. Requires pyridoxal 5'-phosphate as cofactor.

The protein resides in the cytoplasm. The catalysed reaction is (6R)-5,10-methylene-5,6,7,8-tetrahydrofolate + glycine + H2O = (6S)-5,6,7,8-tetrahydrofolate + L-serine. The protein operates within one-carbon metabolism; tetrahydrofolate interconversion. It functions in the pathway amino-acid biosynthesis; glycine biosynthesis; glycine from L-serine: step 1/1. Catalyzes the reversible interconversion of serine and glycine with tetrahydrofolate (THF) serving as the one-carbon carrier. Also exhibits THF-independent aldolase activity toward beta-hydroxyamino acids, producing glycine and aldehydes, via a retro-aldol mechanism. The chain is Serine hydroxymethyltransferase from Methanospirillum hungatei JF-1 (strain ATCC 27890 / DSM 864 / NBRC 100397 / JF-1).